We begin with the raw amino-acid sequence, 637 residues long: tRNA 5-methylaminomethyl-2-thiouridine biosynthesis bifunctional protein MnmC (637 aa).

Residues 1-232 are tRNA (mnm(5)s(2)U34)-methyltransferase; sequence MPERIEWLED…KRDNLQGEFN (232 aa). The segment at 255 to 637 is FAD-dependent cmnm(5)s(2)U34 oxidoreductase; that stretch reads IGAGLAGAAV…YGEAKLVSED (383 aa).

This sequence in the N-terminal section; belongs to the methyltransferase superfamily. tRNA (mnm(5)s(2)U34)-methyltransferase family. The protein in the C-terminal section; belongs to the DAO family. FAD is required as a cofactor.

The protein resides in the cytoplasm. The enzyme catalyses 5-aminomethyl-2-thiouridine(34) in tRNA + S-adenosyl-L-methionine = 5-methylaminomethyl-2-thiouridine(34) in tRNA + S-adenosyl-L-homocysteine + H(+). Catalyzes the last two steps in the biosynthesis of 5-methylaminomethyl-2-thiouridine (mnm(5)s(2)U) at the wobble position (U34) in tRNA. Catalyzes the FAD-dependent demodification of cmnm(5)s(2)U34 to nm(5)s(2)U34, followed by the transfer of a methyl group from S-adenosyl-L-methionine to nm(5)s(2)U34, to form mnm(5)s(2)U34. The protein is tRNA 5-methylaminomethyl-2-thiouridine biosynthesis bifunctional protein MnmC of Polaromonas sp. (strain JS666 / ATCC BAA-500).